The sequence spans 953 residues: Isoleucine--tRNA ligase (953 aa).

The 'HIGH' region signature appears at 61–71; the sequence is PYANGALHIGH. Glutamate 564 is a binding site for L-isoleucyl-5'-AMP. Positions 605 to 609 match the 'KMSKS' region motif; it reads KMSKS. Lysine 608 contributes to the ATP binding site. Positions 922, 925, 942, and 945 each coordinate Zn(2+).

This sequence belongs to the class-I aminoacyl-tRNA synthetase family. IleS type 1 subfamily. In terms of assembly, monomer. Zn(2+) is required as a cofactor.

It localises to the cytoplasm. It carries out the reaction tRNA(Ile) + L-isoleucine + ATP = L-isoleucyl-tRNA(Ile) + AMP + diphosphate. Functionally, catalyzes the attachment of isoleucine to tRNA(Ile). As IleRS can inadvertently accommodate and process structurally similar amino acids such as valine, to avoid such errors it has two additional distinct tRNA(Ile)-dependent editing activities. One activity is designated as 'pretransfer' editing and involves the hydrolysis of activated Val-AMP. The other activity is designated 'posttransfer' editing and involves deacylation of mischarged Val-tRNA(Ile). This chain is Isoleucine--tRNA ligase, found in Thermosynechococcus vestitus (strain NIES-2133 / IAM M-273 / BP-1).